The primary structure comprises 111 residues: Large ribosomal subunit protein uL22 (111 aa).

It belongs to the universal ribosomal protein uL22 family. In terms of assembly, part of the 50S ribosomal subunit.

This protein binds specifically to 23S rRNA; its binding is stimulated by other ribosomal proteins, e.g. L4, L17, and L20. It is important during the early stages of 50S assembly. It makes multiple contacts with different domains of the 23S rRNA in the assembled 50S subunit and ribosome. Functionally, the globular domain of the protein is located near the polypeptide exit tunnel on the outside of the subunit, while an extended beta-hairpin is found that lines the wall of the exit tunnel in the center of the 70S ribosome. This is Large ribosomal subunit protein uL22 from Geobacter sulfurreducens (strain ATCC 51573 / DSM 12127 / PCA).